The following is a 408-amino-acid chain: Putative F-box protein At1g53550 (408 aa).

One can recognise an F-box domain in the interval 29–74 (TCYFDPIPVDLVINILSRLSLECIARCRCVSKLWSSIIRRPNYNQL).

This chain is Putative F-box protein At1g53550, found in Arabidopsis thaliana (Mouse-ear cress).